A 240-amino-acid chain; its full sequence is MPKPADHRNHAAVSTSVLSALFLGAGAALLSACSSPQHASTVPGTTPSIWTGSPAPSGLSGHDEESPGAQSLTSTLTAPDGTKVATAKFEFANGYATVTIATTGVGKLTPGFHGLHIHQVGKCEPNSVAPTGGAPGNFLSAGGHYHVPGHTGTPASGDLASLQVRGDGSAMLVTTTDAFTMDDLLSGAKTAIIIHAGADNFANIPPERYVQVNGTPGPDETTLTTGDAGKRVACGVIGSG.

An N-terminal signal peptide occupies residues 1 to 32 (MPKPADHRNHAAVSTSVLSALFLGAGAALLSA). Cysteine 33 carries N-palmitoyl cysteine lipidation. A lipid anchor (S-diacylglycerol cysteine) is attached at cysteine 33. Composition is skewed to polar residues over residues 36-51 (PQHA…SIWT) and 68-77 (GAQSLTSTLT). Residues 36 to 77 (PQHASTVPGTTPSIWTGSPAPSGLSGHDEESPGAQSLTSTLT) are disordered. Cu cation is bound by residues histidine 116 and histidine 118. The cysteines at positions 123 and 234 are disulfide-linked. Histidine 146 and aspartate 158 together coordinate Zn(2+). A Cu cation-binding site is contributed by histidine 195.

This sequence belongs to the Cu-Zn superoxide dismutase family. Cu cation is required as a cofactor. Requires Zn(2+) as cofactor.

It is found in the cell membrane. The catalysed reaction is 2 superoxide + 2 H(+) = H2O2 + O2. Its activity is regulated as follows. Inhibited by the copper chelator diethyl dithiocarbamate. Destroys radicals which are normally produced within the cells and which are toxic to biological systems. May play a role in favoring mycobacterial survival in phagocytes. This Mycobacterium bovis (strain ATCC BAA-935 / AF2122/97) protein is Superoxide dismutase [Cu-Zn] (sodC).